The following is a 426-amino-acid chain: Glutamate-1-semialdehyde 2,1-aminomutase (426 aa).

At Lys265 the chain carries N6-(pyridoxal phosphate)lysine.

Belongs to the class-III pyridoxal-phosphate-dependent aminotransferase family. HemL subfamily. Homodimer. Pyridoxal 5'-phosphate serves as cofactor.

It is found in the cytoplasm. The enzyme catalyses (S)-4-amino-5-oxopentanoate = 5-aminolevulinate. It functions in the pathway porphyrin-containing compound metabolism; protoporphyrin-IX biosynthesis; 5-aminolevulinate from L-glutamyl-tRNA(Glu): step 2/2. This Halorhodospira halophila (strain DSM 244 / SL1) (Ectothiorhodospira halophila (strain DSM 244 / SL1)) protein is Glutamate-1-semialdehyde 2,1-aminomutase.